The following is an 812-amino-acid chain: Probable inorganic carbon transporter subunit DabA (812 aa).

Positions 338, 340, 498, and 513 each coordinate Zn(2+).

It belongs to the inorganic carbon transporter (TC 9.A.2) DabA family. In terms of assembly, forms a complex with DabB. It depends on Zn(2+) as a cofactor.

Its subcellular location is the cell inner membrane. In terms of biological role, part of an energy-coupled inorganic carbon pump. The chain is Probable inorganic carbon transporter subunit DabA from Methylobacterium sp. (strain 4-46).